The chain runs to 395 residues: Accessory Sec system protein translocase subunit SecY2 (395 aa).

The next 10 helical transmembrane spans lie at 13-33 (VSFS…PLPF), 63-83 (ISIF…IQLL), 102-122 (LMQF…VFAF), 128-148 (GLED…VVWL), 157-177 (VGAS…PNII), 190-210 (WIWL…WLAF), 239-259 (MAAM…LMVG), 272-292 (VFQA…FTFV), 326-346 (LIWI…VFGL), and 355-375 (YAGF…MGGI).

This sequence belongs to the SecY/SEC61-alpha family. SecY2 subfamily. As to quaternary structure, component of the accessory SecA2/SecY2 protein translocase complex required to export cell wall proteins. May form heterotrimers with SecE and SecG subunits.

The protein resides in the cell membrane. Functionally, part of the accessory SecA2/SecY2 system specifically required for export of possible cell wall proteins. The central subunit of a protein translocation channel. The protein is Accessory Sec system protein translocase subunit SecY2 of Lactobacillus johnsonii (strain CNCM I-12250 / La1 / NCC 533).